An 89-amino-acid chain; its full sequence is Large ribosomal subunit protein bL31B (89 aa).

It belongs to the bacterial ribosomal protein bL31 family. Type B subfamily. Part of the 50S ribosomal subunit.

The protein is Large ribosomal subunit protein bL31B of Pseudomonas fluorescens (strain ATCC BAA-477 / NRRL B-23932 / Pf-5).